The primary structure comprises 303 residues: N-acetyl-D-glucosamine kinase (303 aa).

Residues 4-11 and 133-140 each bind ATP; these read GFDVGGTK and GFGGGLIF. Zn(2+)-binding residues include His-157, Cys-177, Cys-179, and Cys-184.

It belongs to the ROK (NagC/XylR) family. NagK subfamily.

It carries out the reaction N-acetyl-D-glucosamine + ATP = N-acetyl-D-glucosamine 6-phosphate + ADP + H(+). The protein operates within cell wall biogenesis; peptidoglycan recycling. In terms of biological role, catalyzes the phosphorylation of N-acetyl-D-glucosamine (GlcNAc) derived from cell-wall degradation, yielding GlcNAc-6-P. This is N-acetyl-D-glucosamine kinase from Aliivibrio fischeri (strain ATCC 700601 / ES114) (Vibrio fischeri).